We begin with the raw amino-acid sequence, 80 residues long: Moroidotoxin A (80 aa).

A signal peptide spans 1-27; that stretch reads MAAVKKHLRFALVAAITIALLVAGSVA. A propeptide spanning residues 28 to 44 is cleaved from the precursor; the sequence is DESSEDIDNIVIKTPLD. Cystine bridges form between cysteine 48–cysteine 65, cysteine 53–cysteine 67, and cysteine 61–cysteine 76.

The protein belongs to the gympietide family. As to expression, expressed in trichomes, that are stiff epidermal hairs located on the surface of petioles and leaves. Not expressed in other aerial parts.

The protein resides in the secreted. Its function is as follows. Neurotoxin certainly responsible for the defensive, persistent, and painful stings of the giant stinging tree. Inhibits inactivation of Nav1.7/SCN9A sodium channel in sensory neurons by directly interacting with TMEM233, a newly described Nav-interacting protein. Has virtually no effect on Nav1.7/SCN9A function in heterologous expression systems and in neurons that do not express TMEM233. Also weakly but significantly affects Nav1.8/SCN10A. Coexpression of TMEM233 with Nav also confers ExTxA sensitivity to Nav1.1-Nav1.6. On the Nav1.7/SCN9A channel, causes a significant hyperpolarizing shift in the voltage dependence of activation. Its effects on Nav currents are irreversible, with no apparent reduction in activity even after repeated wash steps over 30 minutes. In vivo, induces nocifensive behavior in mice (licking or biting and shaking or lifting of the affected paw) lasting for approximately 1 hour. The polypeptide is Moroidotoxin A (Dendrocnide moroides (Gympie stinging tree)).